The following is a 1898-amino-acid chain: Receptor-type tyrosine-protein phosphatase F (1898 aa).

An N-terminal signal peptide occupies residues 1-29; it reads MTPEPAPGRTMVPLVPALVMLGLVAGAHG. Residues 30 to 1254 lie on the Extracellular side of the membrane; the sequence is DSKPVFVKVP…QQQEEPELLW (1225 aa). 3 Ig-like C2-type domains span residues 33–123, 135–224, and 232–314; these read PVFV…AKLS, PSID…ANLY, and PRFS…AQVT. An intrachain disulfide couples cysteine 54 to cysteine 107. 68 to 77 contacts heparin; sequence KKGKKVSSQR. Asparagine 117 is a glycosylation site (N-linked (GlcNAc...) asparagine). Cysteines 156 and 207 form a disulfide. Asparagine 250 and asparagine 295 each carry an N-linked (GlcNAc...) asparagine glycan. Residues cysteine 253 and cysteine 298 are joined by a disulfide bond. Fibronectin type-III domains are found at residues 321–411, 416–510, 514–604, 609–706, 711–810, 811–905, 909–1001, and 1005–1089; these read PPID…TGEQ, PPRR…TQQG, QPAD…TAQS, PPQK…TDED, PPRK…TTGA, VPGR…PEDV, FPQN…TMPV, and FAKN…TAPD. A disordered region spans residues 399–418; the sequence is PPSEAVRARTGEQAPSSPPR. Positions 693–713 are disordered; that stretch reads GPESSPVLVRTDEDVPSGPPR. N-linked (GlcNAc...) asparagine glycosylation occurs at asparagine 721. 2 N-linked (GlcNAc...) asparagine glycosylation sites follow: asparagine 941 and asparagine 957. The helical transmembrane segment at 1255 to 1275 threads the bilayer; the sequence is VTGPVLAVILIVLIVIAILLF. Residues 1276 to 1898 are Cytoplasmic-facing; the sequence is KRKRTHSPSS…YLGSFDHYAT (623 aa). The residue at position 1296 (serine 1296) is a Phosphoserine. Tyrosine-protein phosphatase domains follow at residues 1343–1598 and 1630–1889; these read FSQE…LLEA and MELE…ALEY. Substrate contacts are provided by residues aspartate 1507, 1539–1545, and glutamine 1583; that span reads CSAGVGR. Cysteine 1539 serves as the catalytic Phosphocysteine intermediate. Catalysis depends on cysteine 1830, which acts as the Phosphocysteine intermediate.

It belongs to the protein-tyrosine phosphatase family. Receptor class 2A subfamily. As to quaternary structure, interacts with GRIP1. Interacts with PPFIA1, PPFIA2 and PPFIA3. Interacts with INSR.

Its subcellular location is the membrane. The enzyme catalyses O-phospho-L-tyrosyl-[protein] + H2O = L-tyrosyl-[protein] + phosphate. Its function is as follows. Possible cell adhesion receptor. It possesses an intrinsic protein tyrosine phosphatase activity (PTPase) and dephosphorylates EPHA2 regulating its activity. The first PTPase domain has enzymatic activity, while the second one seems to affect the substrate specificity of the first one. The chain is Receptor-type tyrosine-protein phosphatase F (PTPRF) from Bos taurus (Bovine).